Reading from the N-terminus, the 277-residue chain is Pantothenate synthetase (277 aa).

26-33 (MGYLHQGH) provides a ligand contact to ATP. H33 (proton donor) is an active-site residue. Q57 provides a ligand contact to (R)-pantoate. Q57 provides a ligand contact to beta-alanine. Residue 143–146 (GQKD) coordinates ATP. Residue Q149 participates in (R)-pantoate binding. Residues V172 and 180–183 (LSSR) each bind ATP.

It belongs to the pantothenate synthetase family. Homodimer.

The protein resides in the cytoplasm. The enzyme catalyses (R)-pantoate + beta-alanine + ATP = (R)-pantothenate + AMP + diphosphate + H(+). It functions in the pathway cofactor biosynthesis; (R)-pantothenate biosynthesis; (R)-pantothenate from (R)-pantoate and beta-alanine: step 1/1. Functionally, catalyzes the condensation of pantoate with beta-alanine in an ATP-dependent reaction via a pantoyl-adenylate intermediate. The polypeptide is Pantothenate synthetase (Chloroflexus aggregans (strain MD-66 / DSM 9485)).